Consider the following 461-residue polypeptide: Elongation factor 1-alpha (461 aa).

The region spanning 5 to 242 (KIHINIVVIG…DAILPPSRPT (238 aa)) is the tr-type G domain. Residues 14-21 (GHVDSGKS) are G1. Residue 14–21 (GHVDSGKS) coordinates GTP. The G2 stretch occupies residues 70 to 74 (GITID). A G3 region spans residues 91 to 94 (DAPG). Residues 91 to 95 (DAPGH) and 153 to 156 (NKMD) each bind GTP. The segment at 153-156 (NKMD) is G4. Positions 194–196 (SGW) are G5. Residues Glu-301 and Glu-374 each carry the 5-glutamyl glycerylphosphorylethanolamine modification.

It belongs to the TRAFAC class translation factor GTPase superfamily. Classic translation factor GTPase family. EF-Tu/EF-1A subfamily.

It localises to the cytoplasm. This protein promotes the GTP-dependent binding of aminoacyl-tRNA to the A-site of ribosomes during protein biosynthesis. In Apis mellifera (Honeybee), this protein is Elongation factor 1-alpha.